The following is a 78-amino-acid chain: MSVAEKVKEIIVDQLGVDAAEVNPDAKFVDDLGADSLDLTELIMAMEEEFGVEISDEDAQQIQKVQDAISFIEKKKGE.

A Carrier domain is found at 1-76; the sequence is MSVAEKVKEI…DAISFIEKKK (76 aa). An O-(pantetheine 4'-phosphoryl)serine modification is found at serine 36.

This sequence belongs to the acyl carrier protein (ACP) family. In terms of processing, 4'-phosphopantetheine is transferred from CoA to a specific serine of apo-ACP by AcpS. This modification is essential for activity because fatty acids are bound in thioester linkage to the sulfhydryl of the prosthetic group.

The protein localises to the cytoplasm. Its pathway is lipid metabolism; fatty acid biosynthesis. In terms of biological role, carrier of the growing fatty acid chain in fatty acid biosynthesis. The protein is Acyl carrier protein of Solidesulfovibrio magneticus (strain ATCC 700980 / DSM 13731 / RS-1) (Desulfovibrio magneticus).